Here is a 209-residue protein sequence, read N- to C-terminus: 7-carboxy-7-deazaguanine synthase (209 aa).

Substrate-binding positions include 10-12 and arginine 25; that span reads IQG. One can recognise a Radical SAM core domain in the interval 16-205; that stretch reads YAGLPMLFVR…PQIHKIIYGD (190 aa). 3 residues coordinate [4Fe-4S] cluster: cysteine 29, cysteine 33, and cysteine 36. Threonine 38 is a Mg(2+) binding site. Threonine 68 is a substrate binding site. Glycine 70 provides a ligand contact to S-adenosyl-L-methionine.

This sequence belongs to the radical SAM superfamily. 7-carboxy-7-deazaguanine synthase family. As to quaternary structure, homodimer. [4Fe-4S] cluster serves as cofactor. The cofactor is S-adenosyl-L-methionine. It depends on Mg(2+) as a cofactor.

It catalyses the reaction 6-carboxy-5,6,7,8-tetrahydropterin + H(+) = 7-carboxy-7-deazaguanine + NH4(+). Its pathway is purine metabolism; 7-cyano-7-deazaguanine biosynthesis. Functionally, catalyzes the complex heterocyclic radical-mediated conversion of 6-carboxy-5,6,7,8-tetrahydropterin (CPH4) to 7-carboxy-7-deazaguanine (CDG), a step common to the biosynthetic pathways of all 7-deazapurine-containing compounds. This is 7-carboxy-7-deazaguanine synthase from Thermoplasma acidophilum (strain ATCC 25905 / DSM 1728 / JCM 9062 / NBRC 15155 / AMRC-C165).